Consider the following 269-residue polypeptide: MADNTMTTTQRNIMAFDPKDHEIALSTEDLHVFYGKSEAISEGDLQFERYKISALIGPSGSGKSTYLRSLNRMNDRIATVKGKIMYRGLDINSNDIDVYEMRRHIGMVFQRPNPFAKSIYENIAFALRQRGMNKKQDLDEIVERSLRQAAMWDQVKDDLNKSALALSGGQQQRLCIARAIAIKPDILLLDEPASALDPVSTSQIEDTLLELKQNYTIIIVTHNMQQASRISDYTAFFNLGKVLEYSETGEIFTNPQVDLTNDYISGNFG.

One can recognise an ABC transporter domain in the interval 25-264; sequence LSTEDLHVFY…PQVDLTNDYI (240 aa). Residue 57 to 64 participates in ATP binding; the sequence is GPSGSGKS.

This sequence belongs to the ABC transporter superfamily. Phosphate importer (TC 3.A.1.7) family. As to quaternary structure, the complex is composed of two ATP-binding proteins (PstB), two transmembrane proteins (PstC and PstA) and a solute-binding protein (PstS).

The protein resides in the cell membrane. The enzyme catalyses phosphate(out) + ATP + H2O = ADP + 2 phosphate(in) + H(+). Its function is as follows. Part of the ABC transporter complex PstSACB involved in phosphate import. Responsible for energy coupling to the transport system. The chain is Phosphate import ATP-binding protein PstB 1 from Lactiplantibacillus plantarum (strain ATCC BAA-793 / NCIMB 8826 / WCFS1) (Lactobacillus plantarum).